The sequence spans 248 residues: uncharacterized protein (248 aa).

The stretch at 33–57 (EWQLSEGQKRCEEINRQNRQLRVEK) forms a coiled coil.

This is an uncharacterized protein from Escherichia coli (strain K12).